The following is a 321-amino-acid chain: Acetyl-coenzyme A carboxylase carboxyl transferase subunit beta, chloroplastic (321 aa).

The region spanning 47–321 is the CoA carboxyltransferase N-terminal domain; that stretch reads LWAQCDNCEN…FWFYVLRSSL (275 aa). Residues cysteine 51, cysteine 54, cysteine 70, and cysteine 73 each contribute to the Zn(2+) site. The segment at 51 to 73 adopts a C4-type zinc-finger fold; that stretch reads CDNCENLLYLRFLRENQSVCKEC.

This sequence belongs to the AccD/PCCB family. Acetyl-CoA carboxylase is a heterohexamer composed of biotin carboxyl carrier protein, biotin carboxylase and 2 subunits each of ACCase subunit alpha and ACCase plastid-coded subunit beta (accD). Zn(2+) is required as a cofactor.

It localises to the plastid. The protein localises to the chloroplast stroma. It carries out the reaction N(6)-carboxybiotinyl-L-lysyl-[protein] + acetyl-CoA = N(6)-biotinyl-L-lysyl-[protein] + malonyl-CoA. The protein operates within lipid metabolism; malonyl-CoA biosynthesis; malonyl-CoA from acetyl-CoA: step 1/1. Its function is as follows. Component of the acetyl coenzyme A carboxylase (ACC) complex. Biotin carboxylase (BC) catalyzes the carboxylation of biotin on its carrier protein (BCCP) and then the CO(2) group is transferred by the transcarboxylase to acetyl-CoA to form malonyl-CoA. This chain is Acetyl-coenzyme A carboxylase carboxyl transferase subunit beta, chloroplastic, found in Pinus thunbergii (Japanese black pine).